An 828-amino-acid polypeptide reads, in one-letter code: Conserved oligomeric Golgi complex subunit 3 (828 aa).

An N-acetylalanine modification is found at A2. The tract at residues 504 to 543 (DEQKKVPSEASFSDVHLEEGESNSLTKSGSTESLNPRPQT) is disordered. The segment covering 525-543 (SNSLTKSGSTESLNPRPQT) has biased composition (polar residues). S663 bears the Phosphoserine mark.

Belongs to the COG3 family. In terms of assembly, component of the conserved oligomeric Golgi complex which is composed of eight different subunits and is required for normal Golgi morphology and localization. Interacts with TMEM115. Widely expressed with highest levels in pancreas and testis and lowest levels in lung.

It localises to the golgi apparatus. The protein resides in the golgi stack membrane. In terms of biological role, involved in ER-Golgi transport. Also involved in retrograde (Golgi to ER) transport. In Homo sapiens (Human), this protein is Conserved oligomeric Golgi complex subunit 3 (COG3).